Consider the following 65-residue polypeptide: Diapause-specific peptide (65 aa).

A signal peptide spans 1-24; sequence MGAALKMTIFLLIVACAMIATTEA. Intrachain disulfides connect Cys31–Cys45, Cys35–Cys57, and Cys46–Cys64.

As to expression, highly expressed in the fat body.

It localises to the secreted. In terms of biological role, has antifungal activity against T.rubrum. Blocks voltage-dependent N-type calcium channels (Cav2.2 / CACNA1B). This Gastrophysa atrocyanea (Leaf beetle) protein is Diapause-specific peptide.